Consider the following 294-residue polypeptide: Nucleotide-binding protein A2cp1_0165 (294 aa).

ATP is bound at residue Gly-17–Ser-24. Asp-68–Glu-71 lines the GTP pocket.

This sequence belongs to the RapZ-like family.

Functionally, displays ATPase and GTPase activities. The polypeptide is Nucleotide-binding protein A2cp1_0165 (Anaeromyxobacter dehalogenans (strain 2CP-1 / ATCC BAA-258)).